Consider the following 225-residue polypeptide: Transcriptional activator protein CUP2 (225 aa).

A DNA-binding region (copper-fist) is located at residues 1–40 (MVVINGVKYACETCIRGHRAAQCTHTDGPLQMIRRKGRPS). The segment at 1-108 (MVVINGVKYA…KSKGGSCHRR (108 aa)) is binds copper and DNA. C11, C14, C23, and H25 together coordinate Zn(2+). Positions 109–225 (ANDEAAHVNG…QVSSHNSHSQ (117 aa)) are required for transcriptional activation.

Its subcellular location is the nucleus. Functionally, trans-acting regulatory protein that activates transcription of the CUP1 gene (metallothionein) in response to copper ions. Binds to the CUP1 UAS sequence 5'-GCTTCTTTTCCGCTGA-3'. Binds DNA only in presence of copper or silver. Copper seems to alter the conformation of the protein. The sequence is that of Transcriptional activator protein CUP2 (CUP2) from Saccharomyces cerevisiae (strain ATCC 204508 / S288c) (Baker's yeast).